A 601-amino-acid polypeptide reads, in one-letter code: ATP-dependent lipid A-core flippase (601 aa).

6 consecutive transmembrane segments (helical) span residues phenylalanine 35 to leucine 55, leucine 77 to methionine 97, alanine 150 to tyrosine 170, tryptophan 173 to phenylalanine 193, methionine 263 to isoleucine 283, and serine 286 to valine 306. Residues alanine 36–glutamine 318 enclose the ABC transmembrane type-1 domain. The ABC transporter domain maps to isoleucine 352–leucine 585. Glycine 384 to threonine 391 serves as a coordination point for ATP.

The protein belongs to the ABC transporter superfamily. Lipid exporter (TC 3.A.1.106) family. Homodimer.

The protein localises to the cell inner membrane. It carries out the reaction ATP + H2O + lipid A-core oligosaccharideSide 1 = ADP + phosphate + lipid A-core oligosaccharideSide 2.. Its function is as follows. Involved in lipopolysaccharide (LPS) biosynthesis. Translocates lipid A-core from the inner to the outer leaflet of the inner membrane. Transmembrane domains (TMD) form a pore in the inner membrane and the ATP-binding domain (NBD) is responsible for energy generation. This is ATP-dependent lipid A-core flippase from Syntrophus aciditrophicus (strain SB).